A 394-amino-acid polypeptide reads, in one-letter code: Elongation factor Tu 1 (394 aa).

One can recognise a tr-type G domain in the interval 10–204; sequence KPHVNVGTIG…ALDSYIPEPE (195 aa). The G1 stretch occupies residues 19 to 26; it reads GHVDHGKT. 19–26 contributes to the GTP binding site; sequence GHVDHGKT. T26 contributes to the Mg(2+) binding site. Residues 60–64 form a G2 region; sequence GITIS. Positions 81-84 are G3; the sequence is DCPG. Residues 81 to 85 and 136 to 139 each bind GTP; these read DCPGH and NKCD. Positions 136-139 are G4; sequence NKCD. Positions 174-176 are G5; sequence SAL.

This sequence belongs to the TRAFAC class translation factor GTPase superfamily. Classic translation factor GTPase family. EF-Tu/EF-1A subfamily. Monomer.

The protein localises to the cytoplasm. It catalyses the reaction GTP + H2O = GDP + phosphate + H(+). Its function is as follows. GTP hydrolase that promotes the GTP-dependent binding of aminoacyl-tRNA to the A-site of ribosomes during protein biosynthesis. This chain is Elongation factor Tu 1, found in Vibrio vulnificus (strain YJ016).